Here is a 181-residue protein sequence, read N- to C-terminus: Large ribosomal subunit protein uL6 (181 aa).

The protein belongs to the universal ribosomal protein uL6 family. As to quaternary structure, part of the 50S ribosomal subunit.

In terms of biological role, this protein binds to the 23S rRNA, and is important in its secondary structure. It is located near the subunit interface in the base of the L7/L12 stalk, and near the tRNA binding site of the peptidyltransferase center. This Saccharolobus solfataricus (strain ATCC 35092 / DSM 1617 / JCM 11322 / P2) (Sulfolobus solfataricus) protein is Large ribosomal subunit protein uL6.